The following is a 395-amino-acid chain: Selection and upkeep of intraepithelial T-cells protein 7 (395 aa).

Residues 1-25 form the signal peptide; the sequence is MMKPEFFCFSGFCVYFLFLQVVVSS. The region spanning 26 to 141 is the Ig-like V-type domain; that stretch reads EKLRVTTPTR…DAAIMNLNVT (116 aa). The Extracellular portion of the chain corresponds to 26 to 248; that stretch reads EKLRVTTPTR…FNRDRIWMES (223 aa). Cys49 and Cys123 are joined by a disulfide. Residues Asn92 and Asn139 are each glycosylated (N-linked (GlcNAc...) asparagine). Residues 142–233 form the Ig-like C1-type domain; sequence AVGLETEIHV…TGEEKQTSII (92 aa). Cysteines 163 and 217 form a disulfide. The chain crosses the membrane as a helical span at residues 249–269; it reads LASIVWIMLSVYILYIICFYW. Residues 270–287 are Cytoplasmic-facing; that stretch reads RTGCASGCLSKCFCVVTS. Residues 288–308 traverse the membrane as a helical segment; sequence WPVQIVHLLFCTGTFFAIYLP. Residues 309-329 lie on the Extracellular side of the membrane; sequence HRSRVSLSDPQFPLYNNWITE. The helical transmembrane segment at 330-350 threads the bilayer; it reads LLFVILFLTICFALPIILLFI. The Cytoplasmic portion of the chain corresponds to 351 to 395; it reads QFQFTSLTKWEKNKDGIMDQPRLGKAHETSSLYRKKTGKSWEQEK. The tract at residues 371-395 is disordered; that stretch reads PRLGKAHETSSLYRKKTGKSWEQEK.

This sequence belongs to the SKINT family. As to expression, expressed in skin, thymus, testis and, to a lower extent, bladder.

It is found in the membrane. May act by engaging a cell surface molecule on immature T-cells in the embryonic thymus. In Mus musculus (Mouse), this protein is Selection and upkeep of intraepithelial T-cells protein 7 (Skint7).